The chain runs to 415 residues: Probable RAD2-like endonuclease 369L (415 aa).

The interval 1–114 (MGIKNLTKFI…EDVKKKTLSL (114 aa)) is N-domain. Residues Asp34, Glu86, Glu198, Glu200, Asp219, Asp221, and Asp277 each contribute to the Mg(2+) site. Residues 163–297 (VKQRHRYDIR…VKSYELIKVQ (135 aa)) are I-domain.

This sequence belongs to the XPG/RAD2 endonuclease family. Mg(2+) is required as a cofactor.

It is found in the host nucleus. Probable endonuclease. This chain is Probable RAD2-like endonuclease 369L, found in Acheta domesticus (House cricket).